A 521-amino-acid chain; its full sequence is Bifunctional purine biosynthesis protein PurH (521 aa).

Positions 1–145 (MIKQALISVS…KNHRDVTVVV (145 aa)) constitute an MGS-like domain.

Belongs to the PurH family.

The catalysed reaction is (6R)-10-formyltetrahydrofolate + 5-amino-1-(5-phospho-beta-D-ribosyl)imidazole-4-carboxamide = 5-formamido-1-(5-phospho-D-ribosyl)imidazole-4-carboxamide + (6S)-5,6,7,8-tetrahydrofolate. It carries out the reaction IMP + H2O = 5-formamido-1-(5-phospho-D-ribosyl)imidazole-4-carboxamide. The protein operates within purine metabolism; IMP biosynthesis via de novo pathway; 5-formamido-1-(5-phospho-D-ribosyl)imidazole-4-carboxamide from 5-amino-1-(5-phospho-D-ribosyl)imidazole-4-carboxamide (10-formyl THF route): step 1/1. It participates in purine metabolism; IMP biosynthesis via de novo pathway; IMP from 5-formamido-1-(5-phospho-D-ribosyl)imidazole-4-carboxamide: step 1/1. The chain is Bifunctional purine biosynthesis protein PurH from Burkholderia vietnamiensis (strain G4 / LMG 22486) (Burkholderia cepacia (strain R1808)).